The primary structure comprises 244 residues: tRNA (guanine-N(7)-)-methyltransferase (244 aa).

Residues Glu-42, Asp-67, Asp-94, and Asp-116 each coordinate S-adenosyl-L-methionine. Asp-116 is an active-site residue. Substrate is bound by residues Lys-120, Asp-150, and 191 to 194 (TYYE).

The protein belongs to the class I-like SAM-binding methyltransferase superfamily. TrmB family.

It catalyses the reaction guanosine(46) in tRNA + S-adenosyl-L-methionine = N(7)-methylguanosine(46) in tRNA + S-adenosyl-L-homocysteine. It participates in tRNA modification; N(7)-methylguanine-tRNA biosynthesis. Catalyzes the formation of N(7)-methylguanine at position 46 (m7G46) in tRNA. The polypeptide is tRNA (guanine-N(7)-)-methyltransferase (Porphyromonas gingivalis (strain ATCC BAA-308 / W83)).